Reading from the N-terminus, the 347-residue chain is E3 ubiquitin-protein ligase RNF146-B (347 aa).

The RING-type zinc finger occupies 37–75 (CAICLQTCVHPVSLPCKHVFCYLCVKGASWLGKRCALCR). Residues K85, K95, K131, and K176 each participate in a glycyl lysine isopeptide (Lys-Gly) (interchain with G-Cter in ubiquitin) cross-link. The WWE domain occupies 92–168 (EELKAASRGN…EHGRRRKIKR (77 aa)). Disordered stretches follow at residues 196-241 (SSAD…GTSL) and 257-347 (ERSH…VTEV). Low complexity predominate over residues 203-217 (SVPAQSGASVQSSSV). The span at 282–296 (SIEETESDASSDSED) shows a compositional bias: acidic residues. Residues S288 and S292 each carry the phosphoserine modification. Polar residues predominate over residues 304 to 322 (HSLTQQRLLVPNPSQTVSD).

Interacts with poly-ADP-ribosylated AXIN1, AXIN2, BLZF1 and CASC3. Ubiquitinated; autoubiquitinated. Autoubiquitination is enhanced upon poly(ADP-ribose)-binding.

It is found in the cytoplasm. The protein localises to the cytosol. It catalyses the reaction S-ubiquitinyl-[E2 ubiquitin-conjugating enzyme]-L-cysteine + [acceptor protein]-L-lysine = [E2 ubiquitin-conjugating enzyme]-L-cysteine + N(6)-ubiquitinyl-[acceptor protein]-L-lysine.. The protein operates within protein modification; protein ubiquitination. Its function is as follows. E3 ubiquitin-protein ligase that specifically binds poly-ADP-ribosylated proteins and mediates their ubiquitination and subsequent degradation. Acts as an activator of the Wnt signaling pathway by mediating the ubiquitination of poly-ADP-ribosylated AXIN1 and AXIN2, 2 key components of the beta-catenin destruction complex. Acts in cooperation with tankyrase proteins (TNKS and TNKS2), which mediate poly-ADP-ribosylation of target proteins AXIN1, AXIN2, BLZF1, CASC3, TNKS and TNKS2. Recognizes and binds tankyrase-dependent poly-ADP-ribosylated proteins via its WWE domain and mediates their ubiquitination. In Bos taurus (Bovine), this protein is E3 ubiquitin-protein ligase RNF146-B (RNF146B).